Here is a 391-residue protein sequence, read N- to C-terminus: Methyltransferase/ribosomally synthesized type I borosin cyclic peptide precursor cmaMA (391 aa).

The tract at residues 1-253 (MDATANPKAG…TISTFYLPPK (253 aa)) is methyltransferase domain. Active-site residues include Arg-72, Tyr-76, and Tyr-98. The S-adenosyl-L-methionine site is built by Tyr-98, His-100, Val-103, Ala-130, Gln-172, Ala-215, Ser-246, and Thr-247. Positions 254–373 (APSAKVSLNR…AQLSGALKEG (120 aa)) are clasp domain. Positions 374–376 (GVP) are precursor leader. Position 382 is an N-methylleucine (Leu-382). An N-methylphenylalanine mark is found at Phe-385 and Phe-386. Ile-387 and Ile-388 each carry N-methylisoleucine.

The protein in the N-terminal section; belongs to the precorrin methyltransferase family. Homodimer. CmaMA automethylates at Leu-382, Phe-385, Phe-386, Ile-387 and Ile-388 before being processed by the prolyloligopeptidase ledP which likely forms a peptidyl ester upon removal of the follower propeptide, which then undergoes macrocyclization with the N-terminus of the modified core peptide. Peptide backbone alpha-N-methylations change the physicochemical properties of amide bonds to provide structural constraints and other favorable characteristics including biological membrane permeability to peptides.

It participates in secondary metabolite biosynthesis. In terms of biological role, fusion protein of the methyltransferase cmaM and a type I borosin core peptide; part of the gene cluster that mediates the biosynthesis of a type I borosin, a highly methylated cyclic peptide with potent biological activities. Type I borosins derive from the C-terminus of the fusion protein, and it is the same protein that methylates its own C-terminus using S-adenosyl methionine (SAM). The C-terminus is subsequently cleaved off and macrocyclized by a prolyloligopeptidase to give the final product. The sequence is that of Methyltransferase/ribosomally synthesized type I borosin cyclic peptide precursor cmaMA from Coprinopsis marcescibilis (Agaric fungus).